The following is a 397-amino-acid chain: Alpha-2B adrenergic receptor (397 aa).

Residues Ala-1–Leu-25 form a helical membrane-spanning segment. Topologically, residues Thr-26–Leu-36 are cytoplasmic. The chain crosses the membrane as a helical span at residues Phe-37–Leu-62. At Gly-63–Cys-72 the chain is on the extracellular side. The cysteines at positions 72 and 151 are disulfide-linked. Residues Lys-73–Leu-95 form a helical membrane-spanning segment. Topologically, residues Asp-96 to Lys-117 are cytoplasmic. Residues Cys-118 to Asp-140 form a helical membrane-spanning segment. The Extracellular segment spans residues Gln-141 to Glu-156. Residues Thr-157 to Leu-180 form a helical membrane-spanning segment. At Arg-181 to Val-361 the chain is on the cytoplasmic side. 2 disordered regions span residues Gly-193 to Pro-212 and Ala-230 to Pro-319. The segment covering Ser-280–Glu-300 has biased composition (acidic residues). Residues Pro-301–Pro-319 are compositionally biased toward low complexity. The chain crosses the membrane as a helical span at residues Leu-362–Ile-385. Topologically, residues Cys-386–His-394 are extracellular. A helical membrane pass occupies residues Asp-395–Phe-397.

This sequence belongs to the G-protein coupled receptor 1 family. Adrenergic receptor subfamily. ADRA2B sub-subfamily. In terms of assembly, interacts with RAB26. Interacts with PPP1R9B.

Its subcellular location is the cell membrane. Functionally, alpha-2 adrenergic receptors mediate the catecholamine-induced inhibition of adenylate cyclase through the action of G proteins. This chain is Alpha-2B adrenergic receptor (ADRA2B), found in Talpa europaea (European mole).